The chain runs to 284 residues: Bifunctional protein FolD (284 aa).

Residues 166–168 (GAS) and Ile-232 contribute to the NADP(+) site.

It belongs to the tetrahydrofolate dehydrogenase/cyclohydrolase family. Homodimer.

The catalysed reaction is (6R)-5,10-methylene-5,6,7,8-tetrahydrofolate + NADP(+) = (6R)-5,10-methenyltetrahydrofolate + NADPH. It carries out the reaction (6R)-5,10-methenyltetrahydrofolate + H2O = (6R)-10-formyltetrahydrofolate + H(+). Its pathway is one-carbon metabolism; tetrahydrofolate interconversion. Its function is as follows. Catalyzes the oxidation of 5,10-methylenetetrahydrofolate to 5,10-methenyltetrahydrofolate and then the hydrolysis of 5,10-methenyltetrahydrofolate to 10-formyltetrahydrofolate. The polypeptide is Bifunctional protein FolD (Shewanella frigidimarina (strain NCIMB 400)).